We begin with the raw amino-acid sequence, 408 residues long: Serine/threonine transporter SstT (408 aa).

A run of 9 helical transmembrane segments spans residues 11-31 (LANG…VSLA), 43-63 (FLGS…VFIL), 82-102 (IVVL…LLSM), 141-161 (ALMT…GLAL), 192-212 (IGIF…AIAG), 216-236 (LLAV…PLIV), 298-318 (MGGA…TLGI), 339-359 (ASGV…LFGI), and 363-383 (VAMQ…AAET).

It belongs to the dicarboxylate/amino acid:cation symporter (DAACS) (TC 2.A.23) family.

It localises to the cell inner membrane. The catalysed reaction is L-serine(in) + Na(+)(in) = L-serine(out) + Na(+)(out). It carries out the reaction L-threonine(in) + Na(+)(in) = L-threonine(out) + Na(+)(out). Involved in the import of serine and threonine into the cell, with the concomitant import of sodium (symport system). The chain is Serine/threonine transporter SstT from Shewanella sp. (strain MR-7).